Reading from the N-terminus, the 401-residue chain is Alpha-(1,4)-fucosyltransferase (401 aa).

At 1 to 4 the chain is on the cytoplasmic side; the sequence is MPMR. A helical; Signal-anchor for type II membrane protein transmembrane segment spans residues 5–27; the sequence is YLNAMAALLMMFFTLLILSFTGI. Residues 28 to 401 lie on the Lumenal side of the membrane; that stretch reads LEFPSASTSM…SRRGGKNAGV (374 aa). Asn85 is a glycosylation site (N-linked (GlcNAc...) asparagine).

Belongs to the glycosyltransferase 10 family. Present in root, stem, flower buds and green siliques.

It is found in the golgi apparatus. The protein localises to the golgi stack membrane. It functions in the pathway protein modification; protein glycosylation. May be involved in cell wall synthesis. Catalyzes alpha-1,4 glycosidic linkages and generates Lewis-a epitopes. The polypeptide is Alpha-(1,4)-fucosyltransferase (FUT13) (Arabidopsis thaliana (Mouse-ear cress)).